Consider the following 348-residue polypeptide: MLILGFESSCDETGVALVAADHGERPRLLAHALHSQVAMHEAYGGVVPELASRDHIRRALPLTRQVLAEAGRALADVDVVAYTRGPGLAGALLVGSAVACALAAALDRPVLGIHHLEGHLLSPFLSVDPPQFPFVALLVSGGHTQLMRVDGVGDYALLGETIDDAAGEAFDKSAKLLGLGYPGGPALARLAEFGDPTAYALPRPLLHRDTLDFSFAGLKTAVRTQVLKLGEGVCEQPRADLAAATQAAIVEVLVKKSLAALRATRLQRLVVAGGVGANRSLRSQLDAACAKRGVRVHYPEVSLCTDNGAMIALAAAMRLQAGRATARRDHAFDVQPRWPLAALDVGVP.

Fe cation contacts are provided by H115 and H119. Residues 138–142 (LVSGG), D171, G184, and N278 each bind substrate. D306 lines the Fe cation pocket.

It belongs to the KAE1 / TsaD family. Fe(2+) serves as cofactor.

It localises to the cytoplasm. The catalysed reaction is L-threonylcarbamoyladenylate + adenosine(37) in tRNA = N(6)-L-threonylcarbamoyladenosine(37) in tRNA + AMP + H(+). Functionally, required for the formation of a threonylcarbamoyl group on adenosine at position 37 (t(6)A37) in tRNAs that read codons beginning with adenine. Is involved in the transfer of the threonylcarbamoyl moiety of threonylcarbamoyl-AMP (TC-AMP) to the N6 group of A37, together with TsaE and TsaB. TsaD likely plays a direct catalytic role in this reaction. This Methylibium petroleiphilum (strain ATCC BAA-1232 / LMG 22953 / PM1) protein is tRNA N6-adenosine threonylcarbamoyltransferase.